The sequence spans 354 residues: Ornithine cyclodeaminase (354 aa).

L-ornithine-binding residues include arginine 53 and lysine 77. Residues threonine 92, arginine 120, 147–148 (AQ), aspartate 169, threonine 209, 232–235 (VGGD), lysine 239, and serine 300 contribute to the NAD(+) site. Arginine 120 contacts L-ornithine. Aspartate 235 is an L-ornithine binding site. Aspartate 235 acts as the Proton donor/acceptor in catalysis. Valine 301 lines the L-ornithine pocket.

This sequence belongs to the ornithine cyclodeaminase/mu-crystallin family. It depends on NAD(+) as a cofactor.

The catalysed reaction is L-ornithine = L-proline + NH4(+). The protein operates within amino-acid biosynthesis; L-proline biosynthesis; L-proline from L-ornithine: step 1/1. Its activity is regulated as follows. Is subject to substrate inhibition. Is regulated by L-arginine, which stimulates enzymatic activity at 0.1-1 mM while inhibits activity at higher concentrations, and has pronounced effects on the optima for pH and temperature and on the Km for L-ornithine. Is not inhibited by L-proline. Its function is as follows. Catalyzes the conversion of L-ornithine into L-proline with release of ammonia. Is involved in the utilization of nopaline, a catabolic pathway that proceeds through L-arginine and L-ornithine to L-proline. Nopaline is a predominant opine in plant cells transformed with Ti plasmid pTiC58. This Agrobacterium fabrum (strain C58 / ATCC 33970) (Agrobacterium tumefaciens (strain C58)) protein is Ornithine cyclodeaminase.